The primary structure comprises 393 residues: NAD(P)H-quinone oxidoreductase subunit H, chloroplastic (393 aa).

Belongs to the complex I 49 kDa subunit family. As to quaternary structure, NDH is composed of at least 16 different subunits, 5 of which are encoded in the nucleus.

The protein resides in the plastid. Its subcellular location is the chloroplast thylakoid membrane. The catalysed reaction is a plastoquinone + NADH + (n+1) H(+)(in) = a plastoquinol + NAD(+) + n H(+)(out). It catalyses the reaction a plastoquinone + NADPH + (n+1) H(+)(in) = a plastoquinol + NADP(+) + n H(+)(out). Functionally, NDH shuttles electrons from NAD(P)H:plastoquinone, via FMN and iron-sulfur (Fe-S) centers, to quinones in the photosynthetic chain and possibly in a chloroplast respiratory chain. The immediate electron acceptor for the enzyme in this species is believed to be plastoquinone. Couples the redox reaction to proton translocation, and thus conserves the redox energy in a proton gradient. This chain is NAD(P)H-quinone oxidoreductase subunit H, chloroplastic, found in Oenothera biennis (German evening primrose).